The following is a 301-amino-acid chain: uncharacterized protein (301 aa).

The protein belongs to the asfivirus E301R family. Interacts with host IRF3.

In terms of biological role, plays a role in the inhibition of host innate immune system by acting as a negatively regulator of type I interferon production. Mechanistically, interacts with and prevents host IRF3 nuclear localization to inhibit its transcriptional activity. This is an uncharacterized protein from African swine fever virus (isolate Warthog/Namibia/Wart80/1980) (ASFV).